A 479-amino-acid polypeptide reads, in one-letter code: Sodium-coupled neutral amino acid transporter 5 (479 aa).

At 1-61 (MAISCAVGME…LDFEGKTSFG (61 aa)) the chain is on the cytoplasmic side. The helical transmembrane segment at 62-84 (MSVFNLSNAIMGSGILGLAYAMA) threads the bilayer. Residues 85–97 (HTGVIFFLALLLC) lie on the Extracellular side of the membrane. A helical membrane pass occupies residues 98 to 118 (IALLSSYSIHLLLTCASVVGI). Topologically, residues 119–135 (RAYEQLGQRAFGPAGKV) are cytoplasmic. The helical transmembrane segment at 136-156 (VVAIIICLHNVGAMSSYLFII) threads the bilayer. At 157–176 (KSELPLVIGTFLHMDPEGDW) the chain is on the extracellular side. Residues 177 to 197 (FLKGNLLIILVSLLIILPLAL) traverse the membrane as a helical segment. At 198-202 (MKHLG) the chain is on the cytoplasmic side. Residues 203 to 223 (YLGYTSSLSLTCMLFFLISVI) form a helical membrane-spanning segment. Residues 224–264 (YKKFQIGCDVSHNDTVVEAEQAPLQAFNSSCEAELFTVDSQ) are Extracellular-facing. A disulfide bridge links Cys231 with Cys254. Asn236 is a glycosylation site (N-linked (GlcNAc...) asparagine). A helical membrane pass occupies residues 265-285 (MSYTVPIMAFAFVCHPEVLPI). The Cytoplasmic portion of the chain corresponds to 286 to 302 (YTELCRPTQRRMQAVAN). A helical membrane pass occupies residues 303–323 (MSIGAMFIMYGLTATFGYLTF). The Extracellular segment spans residues 324-341 (YSTVKAEMLEMYTQEDML). Residues 342–362 (ILCVRLAVLLAVTLTVPVVLF) form a helical membrane-spanning segment. Residues 363-383 (PIRRALQQLLFPSKAFSWLRH) lie on the Cytoplasmic side of the membrane. The helical transmembrane segment at 384–404 (VAIALILLILVNILVICVPTI) threads the bilayer. Over 405 to 406 (RD) the chain is Extracellular. The helical transmembrane segment at 407 to 427 (IFGFIGSTSAPSLIFILPSVF) threads the bilayer. Residues 428 to 446 (YLRIVPTEVEPLFSWPKIQ) are Cytoplasmic-facing. The helical transmembrane segment at 447 to 467 (ALCFGVLGVLFMAISLGFMFA) threads the bilayer. Residues 468–479 (NWATGQSRMSGH) are Extracellular-facing.

Belongs to the amino acid/polyamine transporter 2 family. As to expression, expressed in the ganglion cell layer and the nerve fiber layer (at protein level). Also expreseed in the cells of the inner nuclear layer and in the inner plexiform layer (at protein level). Expressed in Mueller and ganglion retinal cell.

It is found in the cell membrane. The enzyme catalyses L-glutamine(out) + Na(+)(out) + H(+)(in) = L-glutamine(in) + Na(+)(in) + H(+)(out). It carries out the reaction L-serine(out) + Na(+)(out) + H(+)(in) = L-serine(in) + Na(+)(in) + H(+)(out). It catalyses the reaction L-alanine(out) + Na(+)(out) + H(+)(in) = L-alanine(in) + Na(+)(in) + H(+)(out). The catalysed reaction is glycine(out) + Na(+)(out) + H(+)(in) = glycine(in) + Na(+)(in) + H(+)(out). The enzyme catalyses L-asparagine(out) + Na(+)(out) + H(+)(in) = L-asparagine(in) + Na(+)(in) + H(+)(out). It carries out the reaction L-histidine(out) + Na(+)(out) + H(+)(in) = L-histidine(in) + Na(+)(in) + H(+)(out). It catalyses the reaction L-cysteine(out) + Na(+)(out) + H(+)(in) = L-cysteine(in) + Na(+)(in) + H(+)(out). Not inhibited by lithium. Partial allosteric regulation on ions sodium binding. Its function is as follows. Symporter that cotransports neutral amino acids and sodium ions, coupled to an H(+) antiporter activity. Releases L-glutamine and glycine from astroglial cells and may participate in the glutamate/GABA-L-glutamine cycle and the NMDA receptors activation. In addition, contributes significantly to L-glutamine uptake in retina, namely in ganglion and Mueller cells therefore, participates in the retinal glutamate-glutamine cycle. The transport activity is pH sensitive, Li(+) tolerant, bidirectional and associated with large uncoupled fluxes of protons. Moreover functions in both direction and is associated with large uncoupled fluxes of protons. The transport is electroneutral coupled to the cotransport of 1 Na(+) and the antiport of 1 H(+). May have a particular importance for modulation of net hepatic glutamine flux. The protein is Sodium-coupled neutral amino acid transporter 5 of Mus musculus (Mouse).